Consider the following 236-residue polypeptide: 2,3,4,5-tetrahydropyridine-2,6-dicarboxylate N-acetyltransferase (236 aa).

Belongs to the transferase hexapeptide repeat family. DapH subfamily.

The enzyme catalyses (S)-2,3,4,5-tetrahydrodipicolinate + acetyl-CoA + H2O = L-2-acetamido-6-oxoheptanedioate + CoA. The protein operates within amino-acid biosynthesis; L-lysine biosynthesis via DAP pathway; LL-2,6-diaminopimelate from (S)-tetrahydrodipicolinate (acetylase route): step 1/3. In terms of biological role, catalyzes the transfer of an acetyl group from acetyl-CoA to tetrahydrodipicolinate. In Lactiplantibacillus plantarum (strain ATCC BAA-793 / NCIMB 8826 / WCFS1) (Lactobacillus plantarum), this protein is 2,3,4,5-tetrahydropyridine-2,6-dicarboxylate N-acetyltransferase.